The following is a 199-amino-acid chain: Recombination protein RecR (199 aa).

Residues 57–72 form a C4-type zinc finger; the sequence is CSICGNITEDDPCDIC. The region spanning 80 to 176 is the Toprim domain; sequence KAVLVVEDSK…KVTRLAHGLS (97 aa).

The protein belongs to the RecR family.

Functionally, may play a role in DNA repair. It seems to be involved in an RecBC-independent recombinational process of DNA repair. It may act with RecF and RecO. This is Recombination protein RecR from Pediococcus pentosaceus (strain ATCC 25745 / CCUG 21536 / LMG 10740 / 183-1w).